The chain runs to 616 residues: Large ribosomal subunit assembly factor BipA (616 aa).

One can recognise a tr-type G domain in the interval 8-204; that stretch reads KKLRNIAIIA…AIVKHVEPPK (197 aa). GTP contacts are provided by residues 20–25 and 134–137; these read DHGKTT and NKVD.

It belongs to the TRAFAC class translation factor GTPase superfamily. Classic translation factor GTPase family. BipA subfamily. Monomer.

The protein localises to the cytoplasm. The enzyme catalyses GTP + H2O = GDP + phosphate + H(+). Its function is as follows. A 50S ribosomal subunit assembly protein with GTPase activity, required for 50S subunit assembly at low temperatures, may also play a role in translation. Binds GTP and analogs. Binds the 70S ribosome between the 30S and 50S subunits, in a similar position as ribosome-bound EF-G; it contacts a number of ribosomal proteins, both rRNAs and the A-site tRNA. This chain is Large ribosomal subunit assembly factor BipA, found in Haemophilus influenzae (strain ATCC 51907 / DSM 11121 / KW20 / Rd).